A 220-amino-acid chain; its full sequence is Guanylate kinase (220 aa).

Residues 11–190 (GVLFVLSSPS…CYGEVMAILR (180 aa)) form the Guanylate kinase-like domain. 18 to 25 (SPSGAGKT) is a binding site for ATP.

It belongs to the guanylate kinase family.

The protein resides in the cytoplasm. The catalysed reaction is GMP + ATP = GDP + ADP. Functionally, essential for recycling GMP and indirectly, cGMP. The protein is Guanylate kinase of Sphingopyxis alaskensis (strain DSM 13593 / LMG 18877 / RB2256) (Sphingomonas alaskensis).